The primary structure comprises 376 residues: Anhydro-N-acetylmuramic acid kinase (376 aa).

16 to 23 (GTSMDGVD) contributes to the ATP binding site.

It belongs to the anhydro-N-acetylmuramic acid kinase family.

It catalyses the reaction 1,6-anhydro-N-acetyl-beta-muramate + ATP + H2O = N-acetyl-D-muramate 6-phosphate + ADP + H(+). It functions in the pathway amino-sugar metabolism; 1,6-anhydro-N-acetylmuramate degradation. The protein operates within cell wall biogenesis; peptidoglycan recycling. In terms of biological role, catalyzes the specific phosphorylation of 1,6-anhydro-N-acetylmuramic acid (anhMurNAc) with the simultaneous cleavage of the 1,6-anhydro ring, generating MurNAc-6-P. Is required for the utilization of anhMurNAc either imported from the medium or derived from its own cell wall murein, and thus plays a role in cell wall recycling. The sequence is that of Anhydro-N-acetylmuramic acid kinase from Paraburkholderia xenovorans (strain LB400).